The sequence spans 110 residues: UPF0122 protein Aflv_1766 (110 aa).

It belongs to the UPF0122 family.

Functionally, might take part in the signal recognition particle (SRP) pathway. This is inferred from the conservation of its genetic proximity to ftsY/ffh. May be a regulatory protein. The polypeptide is UPF0122 protein Aflv_1766 (Anoxybacillus flavithermus (strain DSM 21510 / WK1)).